The sequence spans 175 residues: MVSFPVLAAGGITDINPGLTLWTGITFLVLLFVLGKFAWGPIVKMLAERERTIREAIDSAKRERTEAERLLAEQKALLGKAAREAAELARRNQQEVEAMRQELTARARKEADDLVATARKQIEEEKTKAMSELRAVVADLAIDAASRLVKANLDDASQRKLVEDYIAQLPANRAA.

A helical transmembrane segment spans residues 23 to 43; the sequence is TGITFLVLLFVLGKFAWGPIV.

Belongs to the ATPase B chain family. F-type ATPases have 2 components, F(1) - the catalytic core - and F(0) - the membrane proton channel. F(1) has five subunits: alpha(3), beta(3), gamma(1), delta(1), epsilon(1). F(0) has three main subunits: a(1), b(2) and c(10-14). The alpha and beta chains form an alternating ring which encloses part of the gamma chain. F(1) is attached to F(0) by a central stalk formed by the gamma and epsilon chains, while a peripheral stalk is formed by the delta and b chains.

It is found in the cell inner membrane. Its function is as follows. F(1)F(0) ATP synthase produces ATP from ADP in the presence of a proton or sodium gradient. F-type ATPases consist of two structural domains, F(1) containing the extramembraneous catalytic core and F(0) containing the membrane proton channel, linked together by a central stalk and a peripheral stalk. During catalysis, ATP synthesis in the catalytic domain of F(1) is coupled via a rotary mechanism of the central stalk subunits to proton translocation. Functionally, component of the F(0) channel, it forms part of the peripheral stalk, linking F(1) to F(0). This chain is ATP synthase subunit b, found in Anaeromyxobacter sp. (strain Fw109-5).